The sequence spans 314 residues: Probable cell division protein WhiA (314 aa).

Positions 277–311 (TLKELGEKMPSGAISKSGINHRLRKLNQLAEGYQQ) form a DNA-binding region, H-T-H motif.

Belongs to the WhiA family.

Functionally, involved in cell division and chromosome segregation. This is Probable cell division protein WhiA from Latilactobacillus sakei subsp. sakei (strain 23K) (Lactobacillus sakei subsp. sakei).